A 385-amino-acid chain; its full sequence is Taurine hydroxylase-like protein SAT17 (385 aa).

The protein operates within mycotoxin biosynthesis. Functionally, taurine hydroxylase-like protein; part of the satratoxin SC3 cluster involved in the biosynthesis of satratoxins, trichothecene mycotoxins that are associated with human food poisonings. Satratoxins are suggested to be made by products of multiple gene clusters (SC1, SC2 and SC3) that encode 21 proteins in all, including polyketide synthases, acetyltransferases, and other enzymes expected to modify the trichothecene skeleton. SC1 encodes 10 proteins, SAT1 to SAT10. The largest are SAT8, which encodes a putative polyketide synthase (PKS) with a conventional non-reducing architecture, and SAT10, a putative protein containing four ankyrin repeats and thus may be involved in protein scaffolding. The putative short-chain reductase SAT3 may assist the PKS in some capacity. SAT6 contains a secretory lipase domain and acts probably as a trichothecene esterase. SAT5 encodes a putative acetyltransferase, and so, with SAT6, may affect endogenous protection from toxicity. The probable transcription factor SAT9 may regulate the expression of the SC1 cluster. SC2 encodes proteins SAT11 to SAT16, the largest of which encodes the putative reducing PKS SAT13. SAT11 is a cytochrome P450 monooxygenase, while SAT14 and SAT16 are probable acetyltransferases. The SC2 cluster may be regulated by the transcription factor SAT15. SC3 is a small cluster that encodes 5 proteins, SAT17 to SAT21. SAT21 is a putative MFS-type transporter which may have a role in exporting secondary metabolites. The four other proteins putatively encoded in SC3 include the taurine hydroxylase-like protein SAT17, the O-methyltransferase SAT18, the acetyltransferase SAT19, and the Cys6-type zinc finger SAT20, the latter being probably involved in regulation of SC3 expression. In Stachybotrys chartarum (strain CBS 109288 / IBT 7711) (Toxic black mold), this protein is Taurine hydroxylase-like protein SAT17.